A 477-amino-acid chain; its full sequence is Aspartyl/glutamyl-tRNA(Asn/Gln) amidotransferase subunit B (477 aa).

Belongs to the GatB/GatE family. GatB subfamily. Heterotrimer of A, B and C subunits.

It catalyses the reaction L-glutamyl-tRNA(Gln) + L-glutamine + ATP + H2O = L-glutaminyl-tRNA(Gln) + L-glutamate + ADP + phosphate + H(+). The enzyme catalyses L-aspartyl-tRNA(Asn) + L-glutamine + ATP + H2O = L-asparaginyl-tRNA(Asn) + L-glutamate + ADP + phosphate + 2 H(+). Allows the formation of correctly charged Asn-tRNA(Asn) or Gln-tRNA(Gln) through the transamidation of misacylated Asp-tRNA(Asn) or Glu-tRNA(Gln) in organisms which lack either or both of asparaginyl-tRNA or glutaminyl-tRNA synthetases. The reaction takes place in the presence of glutamine and ATP through an activated phospho-Asp-tRNA(Asn) or phospho-Glu-tRNA(Gln). The sequence is that of Aspartyl/glutamyl-tRNA(Asn/Gln) amidotransferase subunit B from Bdellovibrio bacteriovorus (strain ATCC 15356 / DSM 50701 / NCIMB 9529 / HD100).